A 165-amino-acid chain; its full sequence is Probable DNA polymerase III subunit chi (165 aa).

It belongs to the DNA polymerase III chi/HolC chain family. In terms of assembly, DNA polymerase III contains a core (composed of alpha, epsilon and theta chains) that associates with a tau subunit. This core dimerizes to form the POLIII' complex. PolIII' associates with the gamma complex (composed of gamma, delta, delta', psi and chi chains) and with the beta chain to form the complete DNA polymerase III complex. Interacts directly with the psi subunit (holD). The only subunit of the DNA polymerase III holoenzyme known to interact with single-stranded DNA binding protein (SSB).

It catalyses the reaction DNA(n) + a 2'-deoxyribonucleoside 5'-triphosphate = DNA(n+1) + diphosphate. In terms of biological role, part of the beta sliding clamp loading complex, which hydrolyzes ATP to load the beta clamp onto primed DNA to form the DNA replication pre-initiation complex. DNA polymerase III is a complex, multichain enzyme responsible for most of the replicative synthesis in bacteria. This DNA polymerase also exhibits 3' to 5' exonuclease activity. This chain is Probable DNA polymerase III subunit chi, found in Rickettsia prowazekii (strain Madrid E).